Here is an 850-residue protein sequence, read N- to C-terminus: Serine/threonine-protein phosphatase 6 regulatory subunit 3-B (850 aa).

Disordered regions lie at residues 610–652, 683–778, and 793–850; these read NISY…VNHE, SDGS…MKET, and KSEE…NGPV. Over residues 627–638 the composition is skewed to acidic residues; it reads DSEESTDSEEEE. Polar residues-rich tracts occupy residues 703–731 and 764–778; these read ASFSQLTSPINTKESVRSSSPVEMETSTE and DQMTETVMNGSMKET. Low complexity predominate over residues 826–839; sequence PSSSSQEQRISEQI.

Belongs to the SAPS family.

In terms of biological role, regulatory subunit of protein phosphatase 6 (PP6). May function as a scaffolding PP6 subunit. The chain is Serine/threonine-protein phosphatase 6 regulatory subunit 3-B (ppp6r3-b) from Xenopus laevis (African clawed frog).